The sequence spans 509 residues: 2,3-bisphosphoglycerate-independent phosphoglycerate mutase (509 aa).

Mn(2+)-binding residues include D14 and S64. The active-site Phosphoserine intermediate is the S64. Residues H125, 155 to 156, R187, R193, 259 to 262, and K332 contribute to the substrate site; these read RD and RADR. Mn(2+) is bound by residues D399, H403, D440, H441, and H459.

Belongs to the BPG-independent phosphoglycerate mutase family. As to quaternary structure, monomer. Mn(2+) serves as cofactor.

It carries out the reaction (2R)-2-phosphoglycerate = (2R)-3-phosphoglycerate. The protein operates within carbohydrate degradation; glycolysis; pyruvate from D-glyceraldehyde 3-phosphate: step 3/5. Functionally, catalyzes the interconversion of 2-phosphoglycerate and 3-phosphoglycerate. The chain is 2,3-bisphosphoglycerate-independent phosphoglycerate mutase from Aeromonas salmonicida (strain A449).